A 176-amino-acid polypeptide reads, in one-letter code: Peptide methionine sulfoxide reductase MsrA (176 aa).

Cys14 is a catalytic residue.

It belongs to the MsrA Met sulfoxide reductase family.

It carries out the reaction L-methionyl-[protein] + [thioredoxin]-disulfide + H2O = L-methionyl-(S)-S-oxide-[protein] + [thioredoxin]-dithiol. The enzyme catalyses [thioredoxin]-disulfide + L-methionine + H2O = L-methionine (S)-S-oxide + [thioredoxin]-dithiol. Has an important function as a repair enzyme for proteins that have been inactivated by oxidation. Catalyzes the reversible oxidation-reduction of methionine sulfoxide in proteins to methionine. The sequence is that of Peptide methionine sulfoxide reductase MsrA from Halalkalibacterium halodurans (strain ATCC BAA-125 / DSM 18197 / FERM 7344 / JCM 9153 / C-125) (Bacillus halodurans).